The following is a 927-amino-acid chain: MKFGKYLESQVEANRYVDYKGIRKSLKRFKSEIESLNIHISELKAYNLNNATSKINSKQPSPTTATATTTTIGISSSNGGSNLLRNSISTSKFMNLSQTPLGSSTPMPSDQITAINTSKSILESMEQLKEIQDRLVKSLTDEVSKVNDFYMEREKEAQERFDKLKIQVPLYLKSKEKQRRENEKELNDHDELLSYSESYHYSKKKNKLNNNNNNNNNNNNNNNNTTSPPPLSHDQQHLQQPEIKRINQHHAVLNLTPIKSTPLSPKQQDGSSKKEVKISLLSSPILEEEEEEEEEEDDNIHDQDPEVIEMATVYHYDEDELEEVLSDNCNDNGASDEFNGSVNNNGAGSGGGGNNNSSSELNLTFDIIGSKISKSLKEISTHVVKPTTTFFQPLGDRAKRFMSMGKQKSDEALLKEAFREYYHFLVILKNYQVINYTGFVKIIKKSEKNTGLSIGSQVMSFIESQQFRQSKKIERLTSSIEKIHSELFNNGKIRDARKQLRNSEHVSQQSPTISNFFSGVCAGWTSALLMLIYYFIYTKEFDDFVRFSSIYNVYSAFGLVLLWAFIFGIDCWVWTKSHVHYSFIFELSKNKFNHVKIFQAVTLLSVMWITSIGVYMWQSVSGDDFPFPFVPPEYNPLVLFGAYMLILVCPFNIFQLSVRKWFLNTVFRVLTAPIKSVKFKDFFMGDQLSSLVLMIVQFAQFVCFYTYDVYRPEHSGGCIRYARYFNPFISGLPAYCRLMQCFRRYYDSYDSTTGKGDTVHLRNAVKYSLSIVVVVCSTLDGFFSGDSGWHSPYRLIWVVAGVSNSMYSYWWDLICDWSIVVRPKGQHWNPFKWTLRKRRMYQPTFVYYFAIFSNLGFRTTWTFTKSLPQLTNILPSYKLVVVIGIIEILRRGQWNIFRLENEHLNNCGKFRVTREIPLPYQIRDNEN.

The SPX domain maps to 1–460 (MKFGKYLESQ…GLSIGSQVMS (460 aa)). Disordered regions lie at residues 54 to 78 (KINS…SSSN), 204 to 239 (KKNK…QHLQ), 257 to 305 (PIKS…DQDP), and 326 to 355 (SDNC…GGNN). Composition is skewed to low complexity over residues 60-78 (PSPT…SSSN) and 208-224 (LNNN…NNNN). Residues 257–270 (PIKSTPLSPKQQDG) are compositionally biased toward polar residues. Over residues 286–299 (LEEEEEEEEEEDDN) the composition is skewed to acidic residues. The next 8 helical transmembrane spans lie at 516 to 536 (FFSG…YYFI), 553 to 573 (VYSA…DCWV), 597 to 617 (IFQA…VYMW), 636 to 656 (PLVL…IFQL), 682 to 702 (FFMG…AQFV), 769 to 789 (LSIV…DSGW), 845 to 862 (FVYY…TTWT), and 869 to 889 (QLTN…IEIL). The 211-residue stretch at 717–927 (GCIRYARYFN…LPYQIRDNEN (211 aa)) folds into the EXS domain.

This sequence belongs to the SYG1 (TC 2.A.94) family.

The protein resides in the membrane. This is SPX and EXS domain-containing protein 5 from Dictyostelium discoideum (Social amoeba).